Consider the following 297-residue polypeptide: MTNLNKRPDWIKVKAPNSVEYYQTKDLIKNLRLNTVCEEAACPNIGDCWSRKHATVMILGAVCTRACRFCNVKTGRPDLLDPHEPRRLAEAVQKLNLQHVVITSVDRDDLEDGGASHFAECINEIRRSSPNTTIEILTPDFLRKEGAVEIIANAKPDVFNHNVETVPSLYKTIRPGARYYNSLSLLHNIKKLSPEIFTKSGMMVGLGEEINEVVQVMDDLREANVDFLTIGQYLQPTKSHAEIRKYVTPEEFKYLERIAKTKGFLMVSATPLTRSSYHADKDFQKLKGNYNIRLASM.

The [4Fe-4S] cluster site is built by Cys-37, Cys-42, Cys-48, Cys-63, Cys-67, Cys-70, and Ser-276. A Radical SAM core domain is found at 49–265 (WSRKHATVMI…ERIAKTKGFL (217 aa)).

This sequence belongs to the radical SAM superfamily. Lipoyl synthase family. [4Fe-4S] cluster is required as a cofactor.

The protein resides in the cytoplasm. It carries out the reaction [[Fe-S] cluster scaffold protein carrying a second [4Fe-4S](2+) cluster] + N(6)-octanoyl-L-lysyl-[protein] + 2 oxidized [2Fe-2S]-[ferredoxin] + 2 S-adenosyl-L-methionine + 4 H(+) = [[Fe-S] cluster scaffold protein] + N(6)-[(R)-dihydrolipoyl]-L-lysyl-[protein] + 4 Fe(3+) + 2 hydrogen sulfide + 2 5'-deoxyadenosine + 2 L-methionine + 2 reduced [2Fe-2S]-[ferredoxin]. The protein operates within protein modification; protein lipoylation via endogenous pathway; protein N(6)-(lipoyl)lysine from octanoyl-[acyl-carrier-protein]: step 2/2. Its function is as follows. Catalyzes the radical-mediated insertion of two sulfur atoms into the C-6 and C-8 positions of the octanoyl moiety bound to the lipoyl domains of lipoate-dependent enzymes, thereby converting the octanoylated domains into lipoylated derivatives. The protein is Lipoyl synthase of Rickettsia prowazekii (strain Madrid E).